The sequence spans 291 residues: m-AAA protease-interacting protein 1, mitochondrial (291 aa).

Residues 1–96 (MALAARLLPL…SLPASPIRSY (96 aa)) constitute a mitochondrion transit peptide.

In terms of assembly, interacts with AFG3L2. Interacts with SPG7. Interacts with SMDT1/EMRE (via the N-terminal transit peptide); interaction is direct and takes place before maturation of SMDT1/EMRE.

Its subcellular location is the mitochondrion matrix. In terms of biological role, promotes sorting of SMDT1/EMRE in mitochondria by ensuring its maturation. Interacts with the transit peptide region of SMDT1/EMRE precursor protein in the mitochondrial matrix, leading to protect it against protein degradation by YME1L1, thereby ensuring SMDT1/EMRE maturation by the mitochondrial processing peptidase (PMPCA and PMPCB). This is m-AAA protease-interacting protein 1, mitochondrial from Rattus norvegicus (Rat).